A 199-amino-acid polypeptide reads, in one-letter code: Recombination protein RecR (199 aa).

Residues 57–72 form a C4-type zinc finger; the sequence is CSICGNITESDPCMIC. Residues 80–176 enclose the Toprim domain; the sequence is SKVVVVEQPK…KVTRLAHGLA (97 aa).

It belongs to the RecR family.

Functionally, may play a role in DNA repair. It seems to be involved in an RecBC-independent recombinational process of DNA repair. It may act with RecF and RecO. The chain is Recombination protein RecR from Ligilactobacillus salivarius (strain UCC118) (Lactobacillus salivarius).